A 398-amino-acid polypeptide reads, in one-letter code: Dual specificity mitogen-activated protein kinase kinase 2 (398 aa).

Residues 1–29 (MPAKRKPVLPALTITPSPAEGPGPGGSAE) form a disordered region. The Protein kinase domain occupies 70 to 367 (FERISELGAG…LKMLMNHTFI (298 aa)). Residues 76-84 (LGAGNGGVV) and lysine 99 each bind ATP. Residue aspartate 192 is the Proton acceptor of the active site. Serine 220 and serine 224 each carry phosphoserine; by RAF.

The protein belongs to the protein kinase superfamily. STE Ser/Thr protein kinase family. MAP kinase kinase subfamily. Post-translationally, activated by phosphorylation on Ser/Thr catalyzed by MAP kinase kinase kinases (RAF).

The catalysed reaction is L-seryl-[protein] + ATP = O-phospho-L-seryl-[protein] + ADP + H(+). It carries out the reaction L-threonyl-[protein] + ATP = O-phospho-L-threonyl-[protein] + ADP + H(+). It catalyses the reaction L-tyrosyl-[protein] + ATP = O-phospho-L-tyrosyl-[protein] + ADP + H(+). Catalyzes the concomitant phosphorylation of a threonine and a tyrosine residue in a Thr-Glu-Tyr sequence located in MAP kinases. Activates the ERK1 and ERK2 MAP kinases. This is Dual specificity mitogen-activated protein kinase kinase 2 (MAP2K2) from Gallus gallus (Chicken).